Consider the following 208-residue polypeptide: dITP/XTP pyrophosphatase (208 aa).

Substrate is bound at residue 17 to 22; the sequence is SNNPGK. Residues Asp49 and Asp78 each coordinate Mg(2+). Asp78 acts as the Proton acceptor in catalysis. Substrate-binding positions include Ser79, 164–167, Lys187, and 192–193; these read FGYD and HR.

Belongs to the HAM1 NTPase family. Homodimer. Mg(2+) serves as cofactor.

The enzyme catalyses XTP + H2O = XMP + diphosphate + H(+). It catalyses the reaction dITP + H2O = dIMP + diphosphate + H(+). The catalysed reaction is ITP + H2O = IMP + diphosphate + H(+). Its function is as follows. Pyrophosphatase that catalyzes the hydrolysis of nucleoside triphosphates to their monophosphate derivatives, with a high preference for the non-canonical purine nucleotides XTP (xanthosine triphosphate), dITP (deoxyinosine triphosphate) and ITP. Seems to function as a house-cleaning enzyme that removes non-canonical purine nucleotides from the nucleotide pool, thus preventing their incorporation into DNA/RNA and avoiding chromosomal lesions. This is dITP/XTP pyrophosphatase from Burkholderia pseudomallei (strain K96243).